Reading from the N-terminus, the 428-residue chain is Glutamyl-tRNA reductase (428 aa).

Substrate is bound by residues 50 to 53 (TCNR), Ser-110, 115 to 117 (ETQ), and Gln-121. Cys-51 serves as the catalytic Nucleophile. An NADP(+)-binding site is contributed by 190–195 (GAGEMG).

This sequence belongs to the glutamyl-tRNA reductase family. As to quaternary structure, homodimer.

The enzyme catalyses (S)-4-amino-5-oxopentanoate + tRNA(Glu) + NADP(+) = L-glutamyl-tRNA(Glu) + NADPH + H(+). It functions in the pathway porphyrin-containing compound metabolism; protoporphyrin-IX biosynthesis; 5-aminolevulinate from L-glutamyl-tRNA(Glu): step 1/2. Catalyzes the NADPH-dependent reduction of glutamyl-tRNA(Glu) to glutamate 1-semialdehyde (GSA). In Campylobacter curvus (strain 525.92), this protein is Glutamyl-tRNA reductase.